A 37-amino-acid chain; its full sequence is Cytochrome b6-f complex subunit 5 (37 aa).

Residues 5–25 traverse the membrane as a helical segment; it reads LLCGIVLGLIPITLMGLFVAA.

Belongs to the PetG family. The 4 large subunits of the cytochrome b6-f complex are cytochrome b6, subunit IV (17 kDa polypeptide, PetD), cytochrome f and the Rieske protein, while the 4 small subunits are PetG, PetL, PetM and PetN. The complex functions as a dimer.

It is found in the cellular thylakoid membrane. Its function is as follows. Component of the cytochrome b6-f complex, which mediates electron transfer between photosystem II (PSII) and photosystem I (PSI), cyclic electron flow around PSI, and state transitions. PetG is required for either the stability or assembly of the cytochrome b6-f complex. In Synechococcus sp. (strain CC9311), this protein is Cytochrome b6-f complex subunit 5.